We begin with the raw amino-acid sequence, 647 residues long: Pollen receptor-like kinase 2 (647 aa).

An N-terminal signal peptide occupies residues 1-21 (MESKCLMFVSIVSVFFMVVNG). 5 LRR repeats span residues 87 to 109 (LNSL…EFKK), 110 to 134 (LVAL…AFDG), 136 to 159 (GWLK…LVKS), 161 to 183 (KLIE…RHHP), and 185 to 203 (MLNL…SFST). Residues 248 to 268 (IVAAAVAALAASLIIIGVVIF) form a helical membrane-spanning segment. The Protein kinase domain maps to 338–613 (KASAEILGSG…EAVEKMEDLM (276 aa)). The residue at position 340 (Ser340) is a Phosphoserine. ATP contacts are provided by residues 344–352 (LGSGCFGAS) and Lys366. At Ser418 the chain carries Phosphoserine. Thr438 bears the Phosphothreonine mark. Tyr508 carries the phosphotyrosine modification. Residues 620–647 (DDDFYSTYASEADGRSSRGLSSEGINLS) form a disordered region. Residues 637–647 (RGLSSEGINLS) are compositionally biased toward polar residues.

It belongs to the protein kinase superfamily. Ser/Thr protein kinase family. As to quaternary structure, part of a complex containing ROPGEF1 and ARAC11/ROP1. The interaction between PRK2, ROPGEF1 and ARAC11/ROP1 is phosphorylation-independent. Interacts with ROPGEF12 (via C-terminus). Interacts with ROPGEF1 (via PRONE domain). Expressed in pollen and/or in flowers, but not in leaves. Expressed in pollen tube.

Its subcellular location is the cell membrane. It catalyses the reaction L-seryl-[protein] + ATP = O-phospho-L-seryl-[protein] + ADP + H(+). The catalysed reaction is L-threonyl-[protein] + ATP = O-phospho-L-threonyl-[protein] + ADP + H(+). With respect to regulation, the phosphorylation activity is calcium-independent. Functionally, receptor-like kinase involved in the control of pollen germination and pollen tube polar growth. Phosphorylates ROPGEF1 in its C-terminal region, releasing its auto-inhibition, and thereby activating the ROP1 signaling pathway. May act as a scaffolding protein, recruiting ROPGEF12 to the plasma membrane by binding to its C-terminal domain. Phosphorylates ROPGEF12, releasing its auto-inhibition. This Arabidopsis thaliana (Mouse-ear cress) protein is Pollen receptor-like kinase 2.